Reading from the N-terminus, the 139-residue chain is D-ribose pyranase (139 aa).

Residue His20 is the Proton donor of the active site. Substrate-binding positions include Asp28, His106, and 128–130 (YAN).

It belongs to the RbsD / FucU family. RbsD subfamily. As to quaternary structure, homodecamer.

It localises to the cytoplasm. The enzyme catalyses beta-D-ribopyranose = beta-D-ribofuranose. It functions in the pathway carbohydrate metabolism; D-ribose degradation; D-ribose 5-phosphate from beta-D-ribopyranose: step 1/2. Catalyzes the interconversion of beta-pyran and beta-furan forms of D-ribose. This is D-ribose pyranase from Pectobacterium atrosepticum (strain SCRI 1043 / ATCC BAA-672) (Erwinia carotovora subsp. atroseptica).